An 81-amino-acid polypeptide reads, in one-letter code: MSHAVKIYDTCIGCTQCVRACPLDVLEMVPWDGCKAGQIASSPRTEDCVGCKRCETACPTDFLSIRVYLGDETSRSMGLAY.

4Fe-4S ferredoxin-type domains follow at residues serine 2–tryptophan 31 and glycine 37–tyrosine 68. 8 residues coordinate [4Fe-4S] cluster: cysteine 11, cysteine 14, cysteine 17, cysteine 21, cysteine 48, cysteine 51, cysteine 54, and cysteine 58.

As to quaternary structure, the cyanobacterial PSI reaction center is composed of one copy each of PsaA,B,C,D,E,F,I,J,K,L,M and X, and forms trimeric complexes. Requires [4Fe-4S] cluster as cofactor.

Its subcellular location is the cellular thylakoid membrane. The catalysed reaction is reduced [plastocyanin] + hnu + oxidized [2Fe-2S]-[ferredoxin] = oxidized [plastocyanin] + reduced [2Fe-2S]-[ferredoxin]. Apoprotein for the two 4Fe-4S centers FA and FB of photosystem I (PSI); essential for photochemical activity. FB is the terminal electron acceptor of PSI, donating electrons to ferredoxin. The C-terminus interacts with PsaA/B/D and helps assemble the protein into the PSI complex. Required for binding of PsaD and PsaE to PSI. PSI is a plastocyanin/cytochrome c6-ferredoxin oxidoreductase, converting photonic excitation into a charge separation, which transfers an electron from the donor P700 chlorophyll pair to the spectroscopically characterized acceptors A0, A1, FX, FA and FB in turn. In Prochlorococcus marinus subsp. pastoris (strain CCMP1986 / NIES-2087 / MED4), this protein is Photosystem I iron-sulfur center.